The sequence spans 461 residues: Serine/threonine-protein kinase VHS1 (461 aa).

The Protein kinase domain maps to 12 to 337; sequence YLITSQIGEG…KEVSSITSFT (326 aa). Residues 18–26 and Lys-41 contribute to the ATP site; that span reads IGEGAYGLV. Catalysis depends on Asp-185, which acts as the Proton acceptor. The segment at 384-433 is disordered; sequence LSYTSSSEEEDGIKEGIDDDNGSRSGSFGTLDTDTGLHSSFTSTSCESDN. Acidic residues predominate over residues 390-403; sequence SEEEDGIKEGIDDD. Polar residues predominate over residues 406 to 433; that stretch reads SRSGSFGTLDTDTGLHSSFTSTSCESDN.

It belongs to the protein kinase superfamily. Ser/Thr protein kinase family.

It localises to the cytoplasm. The enzyme catalyses L-seryl-[protein] + ATP = O-phospho-L-seryl-[protein] + ADP + H(+). It catalyses the reaction L-threonyl-[protein] + ATP = O-phospho-L-threonyl-[protein] + ADP + H(+). Its function is as follows. Probable serine/threonine protein kinase involved in the G1-S transition. This Saccharomyces cerevisiae (strain ATCC 204508 / S288c) (Baker's yeast) protein is Serine/threonine-protein kinase VHS1 (VHS1).